The following is a 248-amino-acid chain: Deoxyribose-phosphate aldolase (248 aa).

Catalysis depends on D117, which acts as the Proton donor/acceptor. K179 (schiff-base intermediate with acetaldehyde) is an active-site residue. Residue K208 is the Proton donor/acceptor of the active site.

It belongs to the DeoC/FbaB aldolase family. DeoC type 1 subfamily.

The protein localises to the cytoplasm. It carries out the reaction 2-deoxy-D-ribose 5-phosphate = D-glyceraldehyde 3-phosphate + acetaldehyde. Its pathway is carbohydrate degradation; 2-deoxy-D-ribose 1-phosphate degradation; D-glyceraldehyde 3-phosphate and acetaldehyde from 2-deoxy-alpha-D-ribose 1-phosphate: step 2/2. Catalyzes a reversible aldol reaction between acetaldehyde and D-glyceraldehyde 3-phosphate to generate 2-deoxy-D-ribose 5-phosphate. The chain is Deoxyribose-phosphate aldolase from Thermotoga petrophila (strain ATCC BAA-488 / DSM 13995 / JCM 10881 / RKU-1).